Consider the following 95-residue polypeptide: Co-chaperonin GroES (95 aa).

Belongs to the GroES chaperonin family. As to quaternary structure, heptamer of 7 subunits arranged in a ring. Interacts with the chaperonin GroEL.

It localises to the cytoplasm. Functionally, together with the chaperonin GroEL, plays an essential role in assisting protein folding. The GroEL-GroES system forms a nano-cage that allows encapsulation of the non-native substrate proteins and provides a physical environment optimized to promote and accelerate protein folding. GroES binds to the apical surface of the GroEL ring, thereby capping the opening of the GroEL channel. This chain is Co-chaperonin GroES, found in Rickettsia rickettsii (strain Sheila Smith).